A 332-amino-acid chain; its full sequence is Succinylglutamate desuccinylase (332 aa).

The Zn(2+) site is built by His-59, Glu-62, and His-151. Residue Glu-215 is part of the active site.

Belongs to the AspA/AstE family. Succinylglutamate desuccinylase subfamily. Zn(2+) is required as a cofactor.

It carries out the reaction N-succinyl-L-glutamate + H2O = L-glutamate + succinate. The protein operates within amino-acid degradation; L-arginine degradation via AST pathway; L-glutamate and succinate from L-arginine: step 5/5. Transforms N(2)-succinylglutamate into succinate and glutamate. The sequence is that of Succinylglutamate desuccinylase from Pseudomonas aeruginosa (strain LESB58).